A 216-amino-acid polypeptide reads, in one-letter code: Ras-related protein Rab-11A (216 aa).

Glycine 2 carries the N-acetylglycine modification. Residues serine 20, glycine 21, valine 22, glycine 23, lysine 24, serine 25, asparagine 26, asparagine 37, leucine 38, serine 40, serine 42, and threonine 43 each coordinate GTP. Serine 25 is a Mg(2+) binding site. The Switch 1 motif lies at 36–47; sequence FNLESKSTIGVE. Positions 43 and 66 each coordinate Mg(2+). A Switch 2 motif is present at residues 67–86; it reads TAGQERYRAITSAYYRGAVG. Positions 69, 124, 125, 127, 155, and 156 each coordinate GTP. The disordered stretch occupies residues 183–207; sequence DRRENDMSPSNNVVPIHVPPTTENK. 2 S-geranylgeranyl cysteine lipidation sites follow: cysteine 212 and cysteine 213. The residue at position 213 (cysteine 213) is a Cysteine methyl ester. The propeptide at 214–216 is removed in mature form; sequence QNI.

This sequence belongs to the small GTPase superfamily. Rab family. In terms of assembly, interacts (GTP-bound form) with RAB11FIPs (via their C-termini) including RAB11FIP1, RAB11FIP2, RAB11FIP3, RAB11FIP4 and RAB11FIP5 effectors. Forms a complex with RAB11FIP3 and dynein intermediate chain DYNC1LI1; the interaction between RAB11A1 and RAB11FIP3 is direct; the complex regulates endocytic trafficking. Interacts with EVI5; EVI5 and RAB11FIP3 may be mutually exclusive and compete for binding RAB11A. Interacts with SGSM1, SGSM2, SGSM3 and VIPAS39. Interacts with EXOC6 in a GTP-dependent manner. Interacts with RAB11FIP5. Interacts with STXBP6. Interacts (GDP-bound form) with ZFYVE27. Interacts with BIRC6/bruce. May interact with TBC1D14. Interacts with UNC119; in a cell cycle-dependent manner. GDP-bound and nucleotide-free forms interact with SH3BP5. Interacts (GDP-bound form) with KIF5A in a ZFYVE27-dependent manner. Interacts (GDP-bound form) with RELCH. Found in a complex composed of RELCH, OSBP1 and RAB11A. Interacts with TBC1D12. Interacts with DEF6. Interacts with ATP9A. Forms a heterotetramer with RAB11FIP3; the GTP-bound form is preferred for binding. Forms a complex with Rabin8/RAB3IP and RAB11FIP3, probably a heterohexamer with two of each protein subunit, where Rabin8/RAB3IP and RAB11FIP3 simultaneously bind to RAB11A; the complex promotes preciliary trafficking and cilia growth. Forms a complex containing RAB11A, ASAP1, Rabin8/RAB3IP, RAP11FIP3 and ARF4; the complex promotes preciliary trafficking; the complex binds to RHO in photoreceptor cells and promotes RHO ciliary transport. Interacts (GTP-bound form) with WDR44; the interaction prevents RAB11A-RAB3IP-RAB11FIP3 complex formation. Mg(2+) serves as cofactor.

It localises to the cell membrane. The protein localises to the endosome membrane. Its subcellular location is the recycling endosome membrane. The protein resides in the cleavage furrow. It is found in the cytoplasmic vesicle. It localises to the phagosome. The protein localises to the cytoplasmic vesicle membrane. Its subcellular location is the golgi apparatus. The protein resides in the trans-Golgi network. The enzyme catalyses GTP + H2O = GDP + phosphate + H(+). Its activity is regulated as follows. Regulated by guanine nucleotide exchange factors (GEFs) which promote the exchange of bound GDP for free GTP. Regulated by GTPase activating proteins (GAPs) which increase the GTP hydrolysis activity. Inhibited by GDP dissociation inhibitors (GDIs) which prevent Rab-GDP dissociation. The small GTPases Rab are key regulators of intracellular membrane trafficking, from the formation of transport vesicles to their fusion with membranes. Rabs cycle between an inactive GDP-bound form and an active GTP-bound form that is able to recruit to membranes different set of downstream effectors directly responsible for vesicle formation, movement, tethering and fusion. The small Rab GTPase RAB11A regulates endocytic recycling. Forms a functional Rab11/RAB11FIP3/dynein complex that regulates the movement of peripheral sorting endosomes (SE) along microtubule tracks toward the microtubule organizing center/centrosome, generating the endosomal recycling compartment (ERC). Acts as a major regulator of membrane delivery during cytokinesis. Together with MYO5B and RAB8A participates in epithelial cell polarization. Together with Rabin8/RAB3IP, RAB8A, the exocyst complex, PARD3, PRKCI, ANXA2, CDC42 and DNMBP promotes transcytosis of PODXL to the apical membrane initiation sites (AMIS), apical surface formation and lumenogenesis. Together with MYO5B participates in CFTR trafficking to the plasma membrane and TF (Transferrin) recycling in nonpolarized cells. Required in a complex with MYO5B and RAB11FIP2 for the transport of NPC1L1 to the plasma membrane. Participates in the sorting and basolateral transport of CDH1 from the Golgi apparatus to the plasma membrane. Regulates the recycling of FCGRT (receptor of Fc region of monomeric IgG) to basolateral membranes. May also play a role in melanosome transport and release from melanocytes. Promotes Rabin8/RAB3IP preciliary vesicular trafficking to mother centriole by forming a ciliary targeting complex containing Rab11, ASAP1, Rabin8/RAB3IP, RAB11FIP3 and ARF4, thereby regulating ciliogenesis initiation. On the contrary, upon LPAR1 receptor signaling pathway activation, interaction with phosphorylated WDR44 prevents Rab11-RAB3IP-RAB11FIP3 complex formation and cilia growth. Participates in the export of a subset of neosynthesized proteins through a Rab8-Rab10-Rab11-endososomal dependent export route via interaction with WDR44. The chain is Ras-related protein Rab-11A from Bos taurus (Bovine).